The chain runs to 136 residues: Galectin-7 (136 aa).

The Galectin domain occupies histidine 6–phenylalanine 136. Tryptophan 70–glycine 76 contacts a beta-D-galactoside.

In terms of assembly, monomer.

The protein localises to the cytoplasm. Its subcellular location is the nucleus. The protein resides in the secreted. Could be involved in cell-cell and/or cell-matrix interactions necessary for normal growth control. Pro-apoptotic protein that functions intracellularly upstream of JNK activation and cytochrome c release. The protein is Galectin-7 (Lgals7) of Mus musculus (Mouse).